Reading from the N-terminus, the 353-residue chain is Protein RecA (353 aa).

An ATP-binding site is contributed by 64–71; that stretch reads GPESSGKT. The disordered stretch occupies residues 331-353; it reads LEEASAQKEEVPVEDKLFDDELE. The segment covering 335–346 has biased composition (basic and acidic residues); it reads SAQKEEVPVEDK.

Belongs to the RecA family.

It is found in the cytoplasm. Can catalyze the hydrolysis of ATP in the presence of single-stranded DNA, the ATP-dependent uptake of single-stranded DNA by duplex DNA, and the ATP-dependent hybridization of homologous single-stranded DNAs. It interacts with LexA causing its activation and leading to its autocatalytic cleavage. The protein is Protein RecA of Macrococcus caseolyticus (strain JCSC5402) (Macrococcoides caseolyticum).